The following is a 404-amino-acid chain: Argininosuccinate synthase (404 aa).

Residues 10-18 (AYSGGLDTS) and Ala37 each bind ATP. Residues Tyr88 and Ser93 each coordinate L-citrulline. Gly118 is a binding site for ATP. 3 residues coordinate L-aspartate: Thr120, Asn124, and Asp125. Asn124 contacts L-citrulline. Positions 128, 178, 187, 263, and 275 each coordinate L-citrulline.

The protein belongs to the argininosuccinate synthase family. Type 1 subfamily. In terms of assembly, homotetramer.

Its subcellular location is the cytoplasm. The enzyme catalyses L-citrulline + L-aspartate + ATP = 2-(N(omega)-L-arginino)succinate + AMP + diphosphate + H(+). The protein operates within amino-acid biosynthesis; L-arginine biosynthesis; L-arginine from L-ornithine and carbamoyl phosphate: step 2/3. The sequence is that of Argininosuccinate synthase from Hahella chejuensis (strain KCTC 2396).